The chain runs to 452 residues: Adenosylmethionine-8-amino-7-oxononanoate aminotransferase (452 aa).

116 to 117 (GS) contributes to the pyridoxal 5'-phosphate binding site. Tyr-152 lines the substrate pocket. Position 257 (Asp-257) interacts with pyridoxal 5'-phosphate. Substrate is bound by residues Lys-286, Gly-321, and Arg-414. Lys-286 is modified (N6-(pyridoxal phosphate)lysine).

It belongs to the class-III pyridoxal-phosphate-dependent aminotransferase family. BioA subfamily. Homodimer. Pyridoxal 5'-phosphate is required as a cofactor.

It localises to the cytoplasm. It catalyses the reaction (8S)-8-amino-7-oxononanoate + S-adenosyl-L-methionine = S-adenosyl-4-methylsulfanyl-2-oxobutanoate + (7R,8S)-7,8-diammoniononanoate. It participates in cofactor biosynthesis; biotin biosynthesis; 7,8-diaminononanoate from 8-amino-7-oxononanoate (SAM route): step 1/1. Its function is as follows. Catalyzes the transfer of the alpha-amino group from S-adenosyl-L-methionine (SAM) to 7-keto-8-aminopelargonic acid (KAPA) to form 7,8-diaminopelargonic acid (DAPA). It is the only aminotransferase known to utilize SAM as an amino donor. The polypeptide is Adenosylmethionine-8-amino-7-oxononanoate aminotransferase (Staphylococcus aureus (strain NCTC 8325 / PS 47)).